The primary structure comprises 283 residues: Pantothenate synthetase (283 aa).

Methionine 30–histidine 37 is a binding site for ATP. Histidine 37 acts as the Proton donor in catalysis. Glutamine 61 serves as a coordination point for (R)-pantoate. Glutamine 61 contributes to the beta-alanine binding site. ATP is bound at residue glycine 147 to aspartate 150. Glutamine 153 lines the (R)-pantoate pocket. ATP contacts are provided by residues isoleucine 176 and valine 184–arginine 187.

It belongs to the pantothenate synthetase family. As to quaternary structure, homodimer.

Its subcellular location is the cytoplasm. It carries out the reaction (R)-pantoate + beta-alanine + ATP = (R)-pantothenate + AMP + diphosphate + H(+). It participates in cofactor biosynthesis; (R)-pantothenate biosynthesis; (R)-pantothenate from (R)-pantoate and beta-alanine: step 1/1. Catalyzes the condensation of pantoate with beta-alanine in an ATP-dependent reaction via a pantoyl-adenylate intermediate. This is Pantothenate synthetase from Pelodictyon phaeoclathratiforme (strain DSM 5477 / BU-1).